Here is a 198-residue protein sequence, read N- to C-terminus: Ion-translocating oxidoreductase complex subunit B (198 aa).

Positions methionine 1–serine 26 are hydrophobic. The 4Fe-4S domain occupies glutamate 32–valine 90. 12 residues coordinate [4Fe-4S] cluster: cysteine 49, cysteine 52, cysteine 57, cysteine 73, cysteine 114, cysteine 117, cysteine 120, cysteine 124, cysteine 144, cysteine 147, cysteine 150, and cysteine 154. 4Fe-4S ferredoxin-type domains lie at lysine 105–lysine 134 and alanine 135–leucine 164.

Belongs to the 4Fe4S bacterial-type ferredoxin family. RnfB subfamily. The complex is composed of six subunits: RnfA, RnfB, RnfC, RnfD, RnfE and RnfG. Requires [4Fe-4S] cluster as cofactor.

The protein resides in the cell inner membrane. In terms of biological role, part of a membrane-bound complex that couples electron transfer with translocation of ions across the membrane. The sequence is that of Ion-translocating oxidoreductase complex subunit B from Vibrio vulnificus (strain CMCP6).